The sequence spans 478 residues: Proline--tRNA ligase (478 aa).

It belongs to the class-II aminoacyl-tRNA synthetase family. ProS type 3 subfamily. As to quaternary structure, homodimer.

The protein resides in the cytoplasm. The enzyme catalyses tRNA(Pro) + L-proline + ATP = L-prolyl-tRNA(Pro) + AMP + diphosphate. Catalyzes the attachment of proline to tRNA(Pro) in a two-step reaction: proline is first activated by ATP to form Pro-AMP and then transferred to the acceptor end of tRNA(Pro). The polypeptide is Proline--tRNA ligase (Methanoregula boonei (strain DSM 21154 / JCM 14090 / 6A8)).